A 313-amino-acid chain; its full sequence is Ribosomal RNA small subunit methyltransferase H (313 aa).

Residues 37–39 (GGH), aspartate 57, phenylalanine 83, aspartate 104, and glutamine 111 each bind S-adenosyl-L-methionine.

The protein belongs to the methyltransferase superfamily. RsmH family.

It localises to the cytoplasm. It carries out the reaction cytidine(1402) in 16S rRNA + S-adenosyl-L-methionine = N(4)-methylcytidine(1402) in 16S rRNA + S-adenosyl-L-homocysteine + H(+). Its function is as follows. Specifically methylates the N4 position of cytidine in position 1402 (C1402) of 16S rRNA. The sequence is that of Ribosomal RNA small subunit methyltransferase H from Mycoplasmoides gallisepticum (strain R(low / passage 15 / clone 2)) (Mycoplasma gallisepticum).